The primary structure comprises 423 residues: MFTILTGSQFGDEGKGKIVDLLSKDYDLVVRFQGGDNAGHTVVVGDDVYKLHLIPSGFLLDSRVLIGPGTVLNPEVLAEEIDMLEKTGVEVSSDKLGIDAKTSIIMPYHVELDSLRESLRKEKIGTTKKGIGFAYVDKIARDEVRMSDLVDSEILMNRLTEMAASKEAAIRELGGDPSIVTDSELMDKYVKLGQRLAPYVTDVSYEINKAISEGKNVLAEGAQGTFLDVIHGTQKFVTSSSTIAGSACANLGVGPTKVDEVLGIVKAYITRVGEGPLPTELHDEAGAHLHDVGHEFGTTTGRSRRCGWFDLPLLKKAINLNGYTSVALTKLDVLSDLDVVKVCVAYDLNGERLDYPPEDTSLLSMCKPIYDELEGWSDDLTGVKRYEDIARAAHDYVEKLEGMMGVPIKYVSVGPGREQTFEK.

GTP contacts are provided by residues 11–17 (GDEGKGK) and 39–41 (GHT). The active-site Proton acceptor is the Asp12. Residues Asp12 and Gly39 each contribute to the Mg(2+) site. Residues 12–15 (DEGK), 37–40 (NAGH), Thr127, Arg141, Gln223, Thr238, and Arg302 each bind IMP. The active-site Proton donor is the His40. Substrate is bound at residue 298-304 (TTTGRSR). Residues Arg304, 330-332 (KLD), and 412-414 (SVG) contribute to the GTP site.

The protein belongs to the adenylosuccinate synthetase family. As to quaternary structure, homodimer. Mg(2+) serves as cofactor.

It is found in the cytoplasm. The catalysed reaction is IMP + L-aspartate + GTP = N(6)-(1,2-dicarboxyethyl)-AMP + GDP + phosphate + 2 H(+). Its pathway is purine metabolism; AMP biosynthesis via de novo pathway; AMP from IMP: step 1/2. Plays an important role in the de novo pathway of purine nucleotide biosynthesis. Catalyzes the first committed step in the biosynthesis of AMP from IMP. The protein is Adenylosuccinate synthetase of Methanococcoides burtonii (strain DSM 6242 / NBRC 107633 / OCM 468 / ACE-M).